A 235-amino-acid chain; its full sequence is Small ribosomal subunit protein uS3 (235 aa).

Residues 39-107 enclose the KH type-2 domain; sequence VRSYVKKKLI…PAQVNISEIR (69 aa).

It belongs to the universal ribosomal protein uS3 family. Part of the 30S ribosomal subunit. Forms a tight complex with proteins S10 and S14.

Binds the lower part of the 30S subunit head. Binds mRNA in the 70S ribosome, positioning it for translation. The protein is Small ribosomal subunit protein uS3 of Buchnera aphidicola subsp. Cinara cedri (strain Cc).